A 104-amino-acid chain; its full sequence is Thioredoxin (104 aa).

The Thioredoxin domain occupies 2–104; sequence AIVKVTDSNF…NLAEVLDKHL (103 aa). A disulfide bridge connects residues cysteine 29 and cysteine 32.

The protein belongs to the thioredoxin family.

Functionally, component of the thioredoxin-thioredoxin reductase system. Participates in various redox reactions through the reversible oxidation of its active center dithiol to a disulfide and catalyzes dithiol-disulfide exchange reactions. This Staphylococcus haemolyticus (strain JCSC1435) protein is Thioredoxin (trxA).